Here is a 361-residue protein sequence, read N- to C-terminus: tRNA-specific 2-thiouridylase MnmA (361 aa).

Residues 8-15 (GMSGGVDS) and methionine 34 contribute to the ATP site. Residues 94–96 (NPD) are interaction with target base in tRNA. Residue cysteine 99 is the Nucleophile of the active site. Cysteine 99 and cysteine 195 are oxidised to a cystine. Residue glycine 123 coordinates ATP. The tract at residues 145-147 (KDQ) is interaction with tRNA. Catalysis depends on cysteine 195, which acts as the Cysteine persulfide intermediate. The segment at 307-308 (RY) is interaction with tRNA.

This sequence belongs to the MnmA/TRMU family.

It is found in the cytoplasm. The catalysed reaction is S-sulfanyl-L-cysteinyl-[protein] + uridine(34) in tRNA + AH2 + ATP = 2-thiouridine(34) in tRNA + L-cysteinyl-[protein] + A + AMP + diphosphate + H(+). Its function is as follows. Catalyzes the 2-thiolation of uridine at the wobble position (U34) of tRNA, leading to the formation of s(2)U34. In Legionella pneumophila (strain Lens), this protein is tRNA-specific 2-thiouridylase MnmA.